The sequence spans 114 residues: Large ribosomal subunit protein uL22 (114 aa).

Belongs to the universal ribosomal protein uL22 family. Part of the 50S ribosomal subunit.

This protein binds specifically to 23S rRNA; its binding is stimulated by other ribosomal proteins, e.g. L4, L17, and L20. It is important during the early stages of 50S assembly. It makes multiple contacts with different domains of the 23S rRNA in the assembled 50S subunit and ribosome. In terms of biological role, the globular domain of the protein is located near the polypeptide exit tunnel on the outside of the subunit, while an extended beta-hairpin is found that lines the wall of the exit tunnel in the center of the 70S ribosome. This Desulfitobacterium hafniense (strain Y51) protein is Large ribosomal subunit protein uL22.